The following is a 61-amino-acid chain: Photosystem II reaction center protein K (61 aa).

The propeptide occupies 1–24; it reads MLNIFSLICICLNSVLYSSSFFVA. Residues 40–60 traverse the membrane as a helical segment; it reads MPVIPVLFFLLAFVWQAAVSF.

This sequence belongs to the PsbK family. PSII is composed of 1 copy each of membrane proteins PsbA, PsbB, PsbC, PsbD, PsbE, PsbF, PsbH, PsbI, PsbJ, PsbK, PsbL, PsbM, PsbT, PsbX, PsbY, PsbZ, Psb30/Ycf12, at least 3 peripheral proteins of the oxygen-evolving complex and a large number of cofactors. It forms dimeric complexes.

It is found in the plastid. The protein localises to the chloroplast thylakoid membrane. One of the components of the core complex of photosystem II (PSII). PSII is a light-driven water:plastoquinone oxidoreductase that uses light energy to abstract electrons from H(2)O, generating O(2) and a proton gradient subsequently used for ATP formation. It consists of a core antenna complex that captures photons, and an electron transfer chain that converts photonic excitation into a charge separation. The sequence is that of Photosystem II reaction center protein K from Morus indica (Mulberry).